A 128-amino-acid polypeptide reads, in one-letter code: S-adenosylmethionine decarboxylase proenzyme (128 aa).

Catalysis depends on Ser-61, which acts as the Schiff-base intermediate with substrate; via pyruvic acid. Ser-61 is modified (pyruvic acid (Ser); by autocatalysis). His-66 (proton acceptor; for processing activity) is an active-site residue. The Proton donor; for catalytic activity role is filled by Cys-81.

This sequence belongs to the prokaryotic AdoMetDC family. Type 1 subfamily. As to quaternary structure, heterotetramer of two alpha and two beta chains arranged as a dimer of alpha/beta heterodimers. The cofactor is pyruvate. In terms of processing, is synthesized initially as an inactive proenzyme. Formation of the active enzyme involves a self-maturation process in which the active site pyruvoyl group is generated from an internal serine residue via an autocatalytic post-translational modification. Two non-identical subunits are generated from the proenzyme in this reaction, and the pyruvate is formed at the N-terminus of the alpha chain, which is derived from the carboxyl end of the proenzyme. The post-translation cleavage follows an unusual pathway, termed non-hydrolytic serinolysis, in which the side chain hydroxyl group of the serine supplies its oxygen atom to form the C-terminus of the beta chain, while the remainder of the serine residue undergoes an oxidative deamination to produce ammonia and the pyruvoyl group blocking the N-terminus of the alpha chain.

It catalyses the reaction S-adenosyl-L-methionine + H(+) = S-adenosyl 3-(methylsulfanyl)propylamine + CO2. Its pathway is amine and polyamine biosynthesis; S-adenosylmethioninamine biosynthesis; S-adenosylmethioninamine from S-adenosyl-L-methionine: step 1/1. In terms of biological role, catalyzes the decarboxylation of S-adenosylmethionine to S-adenosylmethioninamine (dcAdoMet), the propylamine donor required for the synthesis of the polyamines spermine and spermidine from the diamine putrescine. The polypeptide is S-adenosylmethionine decarboxylase proenzyme (Parasynechococcus marenigrum (strain WH8102)).